The primary structure comprises 419 residues: UDP-N-acetylglucosamine 1-carboxyvinyltransferase (419 aa).

22–23 contacts phosphoenolpyruvate; it reads KN. A UDP-N-acetyl-alpha-D-glucosamine-binding site is contributed by Arg-91. Residue Cys-115 is the Proton donor of the active site. Cys-115 bears the 2-(S-cysteinyl)pyruvic acid O-phosphothioketal mark. UDP-N-acetyl-alpha-D-glucosamine-binding positions include 120–124, 160–163, Asp-305, and Val-327; these read RPVDL and KVSV.

It belongs to the EPSP synthase family. MurA subfamily.

It localises to the cytoplasm. It carries out the reaction phosphoenolpyruvate + UDP-N-acetyl-alpha-D-glucosamine = UDP-N-acetyl-3-O-(1-carboxyvinyl)-alpha-D-glucosamine + phosphate. The protein operates within cell wall biogenesis; peptidoglycan biosynthesis. Its function is as follows. Cell wall formation. Adds enolpyruvyl to UDP-N-acetylglucosamine. In Escherichia fergusonii (strain ATCC 35469 / DSM 13698 / CCUG 18766 / IAM 14443 / JCM 21226 / LMG 7866 / NBRC 102419 / NCTC 12128 / CDC 0568-73), this protein is UDP-N-acetylglucosamine 1-carboxyvinyltransferase.